The sequence spans 671 residues: DNA ligase (671 aa).

Residues 32-36, 81-82, and Glu113 contribute to the NAD(+) site; these read DAEYD and SL. The N6-AMP-lysine intermediate role is filled by Lys115. NAD(+) contacts are provided by Arg136, Glu173, Lys290, and Lys314. Zn(2+)-binding residues include Cys408, Cys411, Cys426, and Cys432. A BRCT domain is found at 593–671; sequence EIDSPFAGKT…EAEMIRLLGA (79 aa).

The protein belongs to the NAD-dependent DNA ligase family. LigA subfamily. Requires Mg(2+) as cofactor. It depends on Mn(2+) as a cofactor.

The catalysed reaction is NAD(+) + (deoxyribonucleotide)n-3'-hydroxyl + 5'-phospho-(deoxyribonucleotide)m = (deoxyribonucleotide)n+m + AMP + beta-nicotinamide D-nucleotide.. DNA ligase that catalyzes the formation of phosphodiester linkages between 5'-phosphoryl and 3'-hydroxyl groups in double-stranded DNA using NAD as a coenzyme and as the energy source for the reaction. It is essential for DNA replication and repair of damaged DNA. The chain is DNA ligase from Salmonella heidelberg (strain SL476).